Reading from the N-terminus, the 311-residue chain is Methionyl-tRNA formyltransferase (311 aa).

109 to 112 (SLLP) contributes to the (6S)-5,6,7,8-tetrahydrofolate binding site.

The protein belongs to the Fmt family.

The catalysed reaction is L-methionyl-tRNA(fMet) + (6R)-10-formyltetrahydrofolate = N-formyl-L-methionyl-tRNA(fMet) + (6S)-5,6,7,8-tetrahydrofolate + H(+). Attaches a formyl group to the free amino group of methionyl-tRNA(fMet). The formyl group appears to play a dual role in the initiator identity of N-formylmethionyl-tRNA by promoting its recognition by IF2 and preventing the misappropriation of this tRNA by the elongation apparatus. The polypeptide is Methionyl-tRNA formyltransferase (Staphylococcus aureus (strain bovine RF122 / ET3-1)).